The following is a 291-amino-acid chain: Co-chaperone protein DjlA (291 aa).

The Periplasmic portion of the chain corresponds to 1–6; the sequence is MRYWGK. The chain crosses the membrane as a helical span at residues 7–31; sequence LLGLALGIVSSTGIWGMIMGLLMGH. At 32–291 the chain is on the cytoplasmic side; it reads WIDRARASRR…ELLKSANQTK (260 aa). Residues 177–223 are disordered; it reads ESPTGQQSRQNQSRQNGKSQQRRNNGYSNGHSYGGQRPPSPLRGPTV. A compositionally biased stretch (low complexity) spans 181–211; sequence GQQSRQNQSRQNGKSQQRRNNGYSNGHSYGG. A J domain is found at 225–291; it reads SACRTLGVRS…ELLKSANQTK (67 aa).

Homodimer.

Its subcellular location is the cell inner membrane. In terms of biological role, regulatory DnaK co-chaperone. Direct interaction between DnaK and DjlA is needed for the induction of the wcaABCDE operon, involved in the synthesis of a colanic acid polysaccharide capsule, possibly through activation of the RcsB/RcsC phosphotransfer signaling pathway. The colanic acid capsule may help the bacterium survive conditions outside the host. This Pectobacterium atrosepticum (strain SCRI 1043 / ATCC BAA-672) (Erwinia carotovora subsp. atroseptica) protein is Co-chaperone protein DjlA.